The following is a 568-amino-acid chain: Protein yellow (568 aa).

Positions 1-28 are cleaved as a signal peptide; sequence MHAQDKGGVLPGLSLLLIAVAMVCPSQA. Residues N151 and N222 are each glycosylated (N-linked (GlcNAc...) asparagine).

The protein belongs to the major royal jelly protein family.

It is found in the secreted. Controls the pigmentation pattern of the adult cuticle and larval mouth parts. This is Protein yellow (y) from Drosophila guanche (Fruit fly).